The primary structure comprises 66 residues: uncharacterized protein (66 aa).

It belongs to the YeeT/YkfH/YpjJ family.

This is an uncharacterized protein from Escherichia coli (strain K12).